A 238-amino-acid polypeptide reads, in one-letter code: Cysteine-rich venom protein pseudecin (238 aa).

Positions 1-19 are cleaved as a signal peptide; that stretch reads MIAFIVLLSLAAVLQQSSG. Positions 20–28 are excised as a propeptide; the sequence is TVDFASESS. The region spanning 38-164 is the SCP domain; sequence VDKHNALRRS…SSKYLYVCQY (127 aa). Zn(2+)-binding residues include Thr51 and Ser106. Intrachain disulfides connect Cys75-Cys153, Cys92-Cys165, Cys148-Cys162, Cys184-Cys191, Cys187-Cys196, Cys200-Cys233, Cys209-Cys227, and Cys218-Cys231. A ShKT domain is found at 200–233; the sequence is CNYNNDFSNCKSLAKKSKCQTEWIKKKCPASCFC.

Expressed by the venom gland.

It localises to the secreted. Its function is as follows. Blocks olfactory (CNGA2) and retinal (CNGA1) CNG channel currents. Is really less potent that Pseudechetoxin. Does not affect neither depolarization- nor caffeine-induced contraction of smooth muscle. This is Cysteine-rich venom protein pseudecin from Pseudechis porphyriacus (Red-bellied black snake).